The following is a 142-amino-acid chain: HTH-type transcriptional regulator MntR (142 aa).

The region spanning 1–63 (MPTPSMEDYI…YEKYRGLILT (63 aa)) is the HTH dtxR-type domain. Residues Asp-8, Glu-11, His-77, Glu-99, Glu-102, and His-103 each coordinate Mn(2+).

Belongs to the DtxR/MntR family. In terms of assembly, homodimer.

The protein resides in the cytoplasm. With respect to regulation, DNA binding is strongly activated by Mn(2+). In terms of biological role, central regulator of manganese homeostasis. The sequence is that of HTH-type transcriptional regulator MntR from Listeria innocua serovar 6a (strain ATCC BAA-680 / CLIP 11262).